We begin with the raw amino-acid sequence, 403 residues long: 3-oxoacyl-[acyl-carrier-protein] synthase 2 (403 aa).

Residues 1 to 403 (VITGMGALSP…GGHNAVLVFK (403 aa)) form the Ketosynthase family 3 (KS3) domain. Active-site for beta-ketoacyl synthase activity residues include Cys-158, His-297, and His-334.

The protein belongs to the thiolase-like superfamily. Beta-ketoacyl-ACP synthases family.

The enzyme catalyses a fatty acyl-[ACP] + malonyl-[ACP] + H(+) = a 3-oxoacyl-[ACP] + holo-[ACP] + CO2. It catalyses the reaction (9Z)-hexadecenoyl-[ACP] + malonyl-[ACP] + H(+) = 3-oxo-(11Z)-octadecenoyl-[ACP] + holo-[ACP] + CO2. It participates in lipid metabolism; fatty acid biosynthesis. Functionally, involved in the type II fatty acid elongation cycle. Catalyzes the elongation of a wide range of acyl-ACP by the addition of two carbons from malonyl-ACP to an acyl acceptor. Can efficiently catalyze the conversion of palmitoleoyl-ACP (cis-hexadec-9-enoyl-ACP) to cis-vaccenoyl-ACP (cis-octadec-11-enoyl-ACP), an essential step in the thermal regulation of fatty acid composition. The sequence is that of 3-oxoacyl-[acyl-carrier-protein] synthase 2 (fabF) from Staphylococcus aureus.